The sequence spans 227 residues: 7-cyano-7-deazaguanine synthase (227 aa).

An ATP-binding site is contributed by 8–18 (LSGGTDSATVL). Zn(2+) is bound by residues C192, C202, C205, and C208.

It belongs to the QueC family. Zn(2+) is required as a cofactor.

It catalyses the reaction 7-carboxy-7-deazaguanine + NH4(+) + ATP = 7-cyano-7-deazaguanine + ADP + phosphate + H2O + H(+). It participates in purine metabolism; 7-cyano-7-deazaguanine biosynthesis. Its function is as follows. Catalyzes the ATP-dependent conversion of 7-carboxy-7-deazaguanine (CDG) to 7-cyano-7-deazaguanine (preQ(0)). This Rickettsia prowazekii (strain Madrid E) protein is 7-cyano-7-deazaguanine synthase.